The primary structure comprises 753 residues: 5-methyltetrahydropteroyltriglutamate--homocysteine methyltransferase (753 aa).

Residues 17–20 and Lys117 each bind 5-methyltetrahydropteroyltri-L-glutamate; that span reads RELK. L-homocysteine-binding positions include 431 to 433 and Glu484; that span reads IGS. L-methionine is bound by residues 431 to 433 and Glu484; that span reads IGS. 5-methyltetrahydropteroyltri-L-glutamate is bound by residues 515 to 516 and Trp561; that span reads RC. Residue Asp599 participates in L-homocysteine binding. Residue Asp599 participates in L-methionine binding. Residue Glu605 coordinates 5-methyltetrahydropteroyltri-L-glutamate. Positions 641, 643, and 665 each coordinate Zn(2+). His694 (proton donor) is an active-site residue. Zn(2+) is bound at residue Cys726.

The protein belongs to the vitamin-B12 independent methionine synthase family. Requires Zn(2+) as cofactor.

It carries out the reaction 5-methyltetrahydropteroyltri-L-glutamate + L-homocysteine = tetrahydropteroyltri-L-glutamate + L-methionine. It participates in amino-acid biosynthesis; L-methionine biosynthesis via de novo pathway; L-methionine from L-homocysteine (MetE route): step 1/1. Functionally, catalyzes the transfer of a methyl group from 5-methyltetrahydrofolate to homocysteine resulting in methionine formation. In Escherichia coli O1:K1 / APEC, this protein is 5-methyltetrahydropteroyltriglutamate--homocysteine methyltransferase.